A 205-amino-acid chain; its full sequence is Holliday junction branch migration complex subunit RuvA (205 aa).

Residues 1–64 (MIGKLKGLID…EDQIKLFGFR (64 aa)) form a domain I region. Residues 65–143 (TDHEREWFRL…ALSNVDPAVV (79 aa)) are domain II. Residues 144-154 (QLSGALDDNRA) are flexible linker. Residues 154-205 (APRPVTDAISALVNLGYGQPQAAAAIAAAARAAGDDAATAQLIKLGLKELSK) are domain III.

It belongs to the RuvA family. Homotetramer. Forms an RuvA(8)-RuvB(12)-Holliday junction (HJ) complex. HJ DNA is sandwiched between 2 RuvA tetramers; dsDNA enters through RuvA and exits via RuvB. An RuvB hexamer assembles on each DNA strand where it exits the tetramer. Each RuvB hexamer is contacted by two RuvA subunits (via domain III) on 2 adjacent RuvB subunits; this complex drives branch migration. In the full resolvosome a probable DNA-RuvA(4)-RuvB(12)-RuvC(2) complex forms which resolves the HJ.

It is found in the cytoplasm. The RuvA-RuvB-RuvC complex processes Holliday junction (HJ) DNA during genetic recombination and DNA repair, while the RuvA-RuvB complex plays an important role in the rescue of blocked DNA replication forks via replication fork reversal (RFR). RuvA specifically binds to HJ cruciform DNA, conferring on it an open structure. The RuvB hexamer acts as an ATP-dependent pump, pulling dsDNA into and through the RuvAB complex. HJ branch migration allows RuvC to scan DNA until it finds its consensus sequence, where it cleaves and resolves the cruciform DNA. The chain is Holliday junction branch migration complex subunit RuvA from Rhodopseudomonas palustris (strain BisB5).